The primary structure comprises 118 residues: Small ribosomal subunit protein uS13 (118 aa).

Residues Gly94–Lys118 are disordered.

The protein belongs to the universal ribosomal protein uS13 family. As to quaternary structure, part of the 30S ribosomal subunit. Forms a loose heterodimer with protein S19. Forms two bridges to the 50S subunit in the 70S ribosome.

Located at the top of the head of the 30S subunit, it contacts several helices of the 16S rRNA. In the 70S ribosome it contacts the 23S rRNA (bridge B1a) and protein L5 of the 50S subunit (bridge B1b), connecting the 2 subunits; these bridges are implicated in subunit movement. Contacts the tRNAs in the A and P-sites. This chain is Small ribosomal subunit protein uS13, found in Chromohalobacter salexigens (strain ATCC BAA-138 / DSM 3043 / CIP 106854 / NCIMB 13768 / 1H11).